The chain runs to 415 residues: ATP-dependent RNA helicase RhlB (415 aa).

The short motif at 9 to 37 (QRFSALPLHPIVRGALAKKGFDFCTPIQA) is the Q motif element. Positions 40 to 218 (LPISLNGRDV…FEDMNEPEYI (179 aa)) constitute a Helicase ATP-binding domain. 53-60 (AQTGTGKT) contributes to the ATP binding site. The short motif at 164–167 (DEAD) is the DEAD box element. One can recognise a Helicase C-terminal domain in the interval 241-389 (DKMALLLTLM…VSQYETEALL (149 aa)).

It belongs to the DEAD box helicase family. RhlB subfamily. In terms of assembly, component of the RNA degradosome, which is a multiprotein complex involved in RNA processing and mRNA degradation.

The protein resides in the cytoplasm. It carries out the reaction ATP + H2O = ADP + phosphate + H(+). Its function is as follows. DEAD-box RNA helicase involved in RNA degradation. Has RNA-dependent ATPase activity and unwinds double-stranded RNA. This chain is ATP-dependent RNA helicase RhlB, found in Haemophilus influenzae (strain ATCC 51907 / DSM 11121 / KW20 / Rd).